The sequence spans 111 residues: UPF0125 protein SO_1475 (111 aa).

Positions 88 to 111 (VRRRRADKAKDEGRANKVTGGRVS) are disordered.

The protein belongs to the UPF0125 (RnfH) family.

This Shewanella oneidensis (strain ATCC 700550 / JCM 31522 / CIP 106686 / LMG 19005 / NCIMB 14063 / MR-1) protein is UPF0125 protein SO_1475.